The sequence spans 193 residues: Translocation protein SEC72 (193 aa).

Component of the heterotetrameric Sec62/63complex composed of SEC62, SEC63, SEC71 and SEC72. The Sec62/63 complex associates with the Sec61 complex to form the Sec complex. May interact with protein YLR301W. Part of a complex consisting of KAR2, SEC63, SEC66 and SEC72.

It is found in the cytoplasm. In terms of biological role, acts as a non-essential component of the Sec62/63 complex which is involved in SRP-independent post-translational translocation across the endoplasmic reticulum (ER) and functions together with the Sec61 complex and KAR2 in a channel-forming translocon complex. A cycle of assembly and disassembly of Sec62/63 complex from SEC61 may govern the activity of the translocon. SEC72 may be involved in signal peptide recognition for a defined subset of leader peptides, or may increase the efficiency of unusual or 'difficult' secretory precursors to the translocation pore, it may be that this protein binds charged leader peptides to the membrane until they engage the translocation apparatus. The protein is Translocation protein SEC72 (SEC72) of Saccharomyces cerevisiae (strain ATCC 204508 / S288c) (Baker's yeast).